A 176-amino-acid chain; its full sequence is Protein SPMIP1 (176 aa).

Residues 55–80 (TLHPKAPLSPPPAPKSAPSKVPSPVP) are disordered. Positions 61 to 80 (PLSPPPAPKSAPSKVPSPVP) are enriched in pro residues.

The chain is Protein SPMIP1 from Homo sapiens (Human).